Here is an 879-residue protein sequence, read N- to C-terminus: Phosphoenolpyruvate carboxylase (879 aa).

Residues histidine 141 and lysine 546 contribute to the active site.

The protein belongs to the PEPCase type 1 family. The cofactor is Mg(2+).

It catalyses the reaction oxaloacetate + phosphate = phosphoenolpyruvate + hydrogencarbonate. Its function is as follows. Forms oxaloacetate, a four-carbon dicarboxylic acid source for the tricarboxylic acid cycle. This Stutzerimonas stutzeri (strain A1501) (Pseudomonas stutzeri) protein is Phosphoenolpyruvate carboxylase.